A 178-amino-acid chain; its full sequence is Protein GrpE (178 aa).

Polar residues predominate over residues 1–11 (MENTQENPTDQ). The interval 1 to 31 (MENTQENPTDQTTEETGREAQAAENAAPAAE) is disordered. The span at 19-31 (EAQAAENAAPAAE) shows a compositional bias: low complexity.

Belongs to the GrpE family. In terms of assembly, homodimer.

It is found in the cytoplasm. Its function is as follows. Participates actively in the response to hyperosmotic and heat shock by preventing the aggregation of stress-denatured proteins, in association with DnaK and GrpE. It is the nucleotide exchange factor for DnaK and may function as a thermosensor. Unfolded proteins bind initially to DnaJ; upon interaction with the DnaJ-bound protein, DnaK hydrolyzes its bound ATP, resulting in the formation of a stable complex. GrpE releases ADP from DnaK; ATP binding to DnaK triggers the release of the substrate protein, thus completing the reaction cycle. Several rounds of ATP-dependent interactions between DnaJ, DnaK and GrpE are required for fully efficient folding. The protein is Protein GrpE of Burkholderia thailandensis (strain ATCC 700388 / DSM 13276 / CCUG 48851 / CIP 106301 / E264).